Consider the following 145-residue polypeptide: Mitochondrial import receptor subunit TOM20 homolog (145 aa).

The Mitochondrial intermembrane segment spans residues 1-6 (MVGRNS). Residues 7–24 (AIAAGVCGALFIGYCIYF) form a helical membrane-spanning segment. Residues 25 to 145 (DRKRRSDPNF…AQSLAEDDVE (121 aa)) are Cytoplasmic-facing. Residues lysine 35, lysine 56, lysine 61, and lysine 68 each participate in a glycyl lysine isopeptide (Lys-Gly) (interchain with G-Cter in ubiquitin) cross-link. A phosphoserine mark is found at serine 135 and serine 138.

This sequence belongs to the Tom20 family. Forms part of the preprotein translocase complex of the outer mitochondrial membrane (TOM complex) which consists of at least 7 different proteins (TOMM5, TOMM6, TOMM7, TOMM20, TOMM22, TOMM40 and TOMM70). Interacts with TOM22. Interacts with APEX1. Interacts with TBC1D21. Upon mitochondrial depolarization, interacts with PINK1; the interaction is required for PINK1-TOM-TIM23 supercomplex formation which is critical for PINK1 stabilization at the outer mitochondrial membrane, kinase activation and downstream mitophagy. Post-translationally, ubiquitinated by PRKN during mitophagy, leading to its degradation and enhancement of mitophagy. Deubiquitinated by USP30.

The protein localises to the mitochondrion outer membrane. Functionally, central component of the receptor complex responsible for the recognition and translocation of cytosolically synthesized mitochondrial preproteins. Together with TOM22 functions as the transit peptide receptor at the surface of the mitochondrion outer membrane and facilitates the movement of preproteins into the TOM40 translocation pore. Required for the translocation across the mitochondrial outer membrane of cytochrome P450 monooxygenases. This chain is Mitochondrial import receptor subunit TOM20 homolog (TOMM20), found in Bos taurus (Bovine).